Here is a 433-residue protein sequence, read N- to C-terminus: Metacaspase-1 (433 aa).

Residues 1–123 (MYPGRAKPTY…PPSQVQHTGP (123 aa)) form a disordered region. Over residues 9 to 44 (TYNNQQAQQAQSQVGYQTGYSNAQPQQQYYTAPQQQ) the composition is skewed to low complexity. Composition is skewed to polar residues over residues 45-55 (NVSGSSMSFQH) and 83-109 (QQNY…QQPQ). Active-site residues include H222 and C278.

The protein belongs to the peptidase C14B family.

In terms of biological role, involved in cell death (apoptosis). In Kluyveromyces lactis (strain ATCC 8585 / CBS 2359 / DSM 70799 / NBRC 1267 / NRRL Y-1140 / WM37) (Yeast), this protein is Metacaspase-1 (MCA1).